Here is a 227-residue protein sequence, read N- to C-terminus: Uracil-DNA glycosylase 2 (227 aa).

Asp-67 serves as the catalytic Proton acceptor.

The protein belongs to the uracil-DNA glycosylase (UDG) superfamily. UNG family.

The protein localises to the cytoplasm. The catalysed reaction is Hydrolyzes single-stranded DNA or mismatched double-stranded DNA and polynucleotides, releasing free uracil.. Excises uracil residues from the DNA which can arise as a result of misincorporation of dUMP residues by DNA polymerase or due to deamination of cytosine. This is Uracil-DNA glycosylase 2 (ung2) from Streptomyces avermitilis (strain ATCC 31267 / DSM 46492 / JCM 5070 / NBRC 14893 / NCIMB 12804 / NRRL 8165 / MA-4680).